A 231-amino-acid polypeptide reads, in one-letter code: MKVVIVTSVASLLDASIQFQKTACRHHCNYLSMQVVKEIEEFGTINEKNLEFDTWKDVIQNDEIDALVFYRVKQISISTGVLYKSMMRNRTKPISMYFVRDCLAFDGDPPSFRMTSCNINAYNRSKIKDLIILMNMKTCNKKIIGEFIIDNFGSVDALLSIINSNVTWITSVINNSNGRGINIRVSNNKMLTITSFRRFVNKLKMYKTTKCASQLDNLCTEMNKMDIIDKK.

It belongs to the orthopoxvirus OPG058 family.

It is found in the host nucleus. The protein resides in the host nucleolus. This is Protein OPG061 (OPG061) from Vaccinia virus (strain Western Reserve) (VACV).